A 207-amino-acid chain; its full sequence is Peptidyl-tRNA hydrolase (207 aa).

Residue tyrosine 14 coordinates tRNA. Histidine 19 (proton acceptor) is an active-site residue. TRNA is bound by residues tyrosine 64, asparagine 66, and asparagine 112.

Belongs to the PTH family. Monomer.

It localises to the cytoplasm. It catalyses the reaction an N-acyl-L-alpha-aminoacyl-tRNA + H2O = an N-acyl-L-amino acid + a tRNA + H(+). In terms of biological role, hydrolyzes ribosome-free peptidyl-tRNAs (with 1 or more amino acids incorporated), which drop off the ribosome during protein synthesis, or as a result of ribosome stalling. Functionally, catalyzes the release of premature peptidyl moieties from peptidyl-tRNA molecules trapped in stalled 50S ribosomal subunits, and thus maintains levels of free tRNAs and 50S ribosomes. The polypeptide is Peptidyl-tRNA hydrolase (Rhodopseudomonas palustris (strain HaA2)).